The primary structure comprises 206 residues: Potassium channel B446_29190 (206 aa).

Position 1 (Met1) is a topological domain, cytoplasmic. A helical transmembrane segment spans residues 2–25 (NESGRVEAFSDGVFAIAITLLILD). The RxxxFSD motif signature appears at 6–12 (RVEAFSD). Residues 26-44 (IKVPKADGPGGLWHALGAQ) are Extracellular-facing. Residues 31–34 (ADGP) form a short helix H1 region. The tract at residues 36–42 (GLWHALG) is short helix H2. Residues 45–70 (WPSYAAYVVSFLVIGIMWVNHHQVFS) traverse the membrane as a helical segment. The Cytoplasmic portion of the chain corresponds to 71 to 76 (YVARVD). A helical transmembrane segment spans residues 77–102 (RALMFLNLLVLMVVAAVPWPTAMLAE). Topologically, residues 103–110 (YLREDRAS) are extracellular. A helical membrane pass occupies residues 111 to 135 (HVAAAVYSLVMVAMALAFQALWWHL). Topologically, residues 136–147 (TRTGHLFDPRVD) are cytoplasmic. The chain crosses the membrane as a helical span at residues 148-174 (APAARATRIRFALGSLGYPLTVGLAFV). Topologically, residues 175-176 (SA) are extracellular. A helical membrane pass occupies residues 177–192 (PLTLAAHGLLALYYGF). Residues 193–206 (NQVPVPTREAAAPS) lie on the Cytoplasmic side of the membrane.

It belongs to the TMEM175 family. In terms of assembly, homotetramer.

Its subcellular location is the membrane. The enzyme catalyses K(+)(in) = K(+)(out). Potassium channel. In Streptomyces collinus (strain DSM 40733 / Tue 365), this protein is Potassium channel B446_29190.